The primary structure comprises 488 residues: Replication-associated protein (488 aa).

Positions 462 to 488 (PRPRQMQRSATEHNLFQYARSGRDPTS) are disordered.

It localises to the host nucleus. Plays an essential for the replication of viral DNA. Presumably cleaves viral genomic dsRNA replicative form to initiate rolling circle replication. This is Replication-associated protein from Chaetoceros diatodnavirus 1 (Chaetoceros setoense DNA virus).